Consider the following 290-residue polypeptide: Diaminopimelate epimerase (290 aa).

Substrate is bound by residues N14 and N67. C76 serves as the catalytic Proton donor. Substrate is bound by residues 77–78 (GN), N166, N199, and 217–218 (ER). The Proton acceptor role is filled by C226. Residue 227-228 (GT) coordinates substrate.

This sequence belongs to the diaminopimelate epimerase family. Homodimer.

The protein localises to the cytoplasm. It carries out the reaction (2S,6S)-2,6-diaminopimelate = meso-2,6-diaminopimelate. Its pathway is amino-acid biosynthesis; L-lysine biosynthesis via DAP pathway; DL-2,6-diaminopimelate from LL-2,6-diaminopimelate: step 1/1. Catalyzes the stereoinversion of LL-2,6-diaminopimelate (L,L-DAP) to meso-diaminopimelate (meso-DAP), a precursor of L-lysine and an essential component of the bacterial peptidoglycan. This is Diaminopimelate epimerase from Geobacillus thermodenitrificans (strain NG80-2).